The chain runs to 185 residues: Shikimate kinase (185 aa).

15–20 is a binding site for ATP; it reads GAGKST. Ser-19 lines the Mg(2+) pocket. Substrate contacts are provided by Asp-37, Arg-61, and Gly-83. Arg-121 provides a ligand contact to ATP. A substrate-binding site is contributed by Arg-146.

The protein belongs to the shikimate kinase family. Monomer. The cofactor is Mg(2+).

It localises to the cytoplasm. The catalysed reaction is shikimate + ATP = 3-phosphoshikimate + ADP + H(+). It participates in metabolic intermediate biosynthesis; chorismate biosynthesis; chorismate from D-erythrose 4-phosphate and phosphoenolpyruvate: step 5/7. Catalyzes the specific phosphorylation of the 3-hydroxyl group of shikimic acid using ATP as a cosubstrate. This is Shikimate kinase from Blochmanniella floridana.